We begin with the raw amino-acid sequence, 350 residues long: Renin receptor (350 aa).

The first 17 residues, 1–17, serve as a signal peptide directing secretion; sequence MAVLVVLLFFLVAGALG. At 18–302 the chain is on the extracellular side; sequence NEFSILRSPG…YNLAYKYNLE (285 aa). The chain crosses the membrane as a helical span at residues 303–323; that stretch reads YSVVFNLVLWIMIGLALAVII. Over 324-350 the chain is Cytoplasmic; sequence TSYNIWNMDPGYDSIIYRMTNQKIRID. The short motif at 346 to 350 is the Mediates retrograde transport to the ER element; it reads KIRID.

As to quaternary structure, interacts with renin. Accessory component of the multisubunit proton-transporting vacuolar (V)-ATPase protein pump. Interacts (via N-terminus) with ATP6AP1 (via N-terminus). Interacts with ATP6V0D1; ATP6V0D1 is a V-ATPase complex subunit and the interaction promotes V-ATPase complex assembly. Interacts with TMEM9; TMEM9 is a V-ATPase assembly regulator and the interaction induces the interaction with ATP6V0D1. Interacts with VMA21 (via N-terminus); VMA21 is a V-ATPase accessory component. Phosphorylated. Post-translationally, proteolytically cleaved by a furin-like convertase in the trans-Golgi network to generate N- and C-terminal fragments. Expressed in glutamatergic and GABAergic neurons with highest levels in the cortex, the hippocampus, the medial habenular nucleus, the cerebellum, the medulla and the olfactory bulb (at protein level).

Its subcellular location is the endoplasmic reticulum membrane. It is found in the lysosome membrane. The protein resides in the cytoplasmic vesicle. It localises to the autophagosome membrane. The protein localises to the cell projection. Its subcellular location is the dendritic spine membrane. It is found in the axon. The protein resides in the endosome membrane. It localises to the clathrin-coated vesicle membrane. The protein localises to the secretory vesicle. Its subcellular location is the synaptic vesicle membrane. Functionally, multifunctional protein which functions as a renin, prorenin cellular receptor and is involved in the assembly of the lysosomal proton-transporting V-type ATPase (V-ATPase) and the acidification of the endo-lysosomal system. May mediate renin-dependent cellular responses by activating ERK1 and ERK2. By increasing the catalytic efficiency of renin in AGT/angiotensinogen conversion to angiotensin I, may also play a role in the renin-angiotensin system (RAS). Through its function in V-type ATPase (v-ATPase) assembly and acidification of the lysosome it regulates protein degradation and may control different signaling pathways important for proper brain development, synapse morphology and synaptic transmission. This Mus musculus (Mouse) protein is Renin receptor.